The chain runs to 310 residues: Ribosomal RNA small subunit methyltransferase H (310 aa).

Residues 32–34 (GGH), D52, F79, D100, and Q107 contribute to the S-adenosyl-L-methionine site.

Belongs to the methyltransferase superfamily. RsmH family.

The protein resides in the cytoplasm. It catalyses the reaction cytidine(1402) in 16S rRNA + S-adenosyl-L-methionine = N(4)-methylcytidine(1402) in 16S rRNA + S-adenosyl-L-homocysteine + H(+). Functionally, specifically methylates the N4 position of cytidine in position 1402 (C1402) of 16S rRNA. The sequence is that of Ribosomal RNA small subunit methyltransferase H from Geobacillus thermodenitrificans (strain NG80-2).